The sequence spans 95 residues: Aspartyl/glutamyl-tRNA(Asn/Gln) amidotransferase subunit C (95 aa).

It belongs to the GatC family. As to quaternary structure, heterotrimer of A, B and C subunits.

It carries out the reaction L-glutamyl-tRNA(Gln) + L-glutamine + ATP + H2O = L-glutaminyl-tRNA(Gln) + L-glutamate + ADP + phosphate + H(+). The enzyme catalyses L-aspartyl-tRNA(Asn) + L-glutamine + ATP + H2O = L-asparaginyl-tRNA(Asn) + L-glutamate + ADP + phosphate + 2 H(+). Allows the formation of correctly charged Asn-tRNA(Asn) or Gln-tRNA(Gln) through the transamidation of misacylated Asp-tRNA(Asn) or Glu-tRNA(Gln) in organisms which lack either or both of asparaginyl-tRNA or glutaminyl-tRNA synthetases. The reaction takes place in the presence of glutamine and ATP through an activated phospho-Asp-tRNA(Asn) or phospho-Glu-tRNA(Gln). This chain is Aspartyl/glutamyl-tRNA(Asn/Gln) amidotransferase subunit C, found in Bradyrhizobium diazoefficiens (strain JCM 10833 / BCRC 13528 / IAM 13628 / NBRC 14792 / USDA 110).